A 208-amino-acid polypeptide reads, in one-letter code: Protein-L-isoaspartate O-methyltransferase (208 aa).

Ser59 is an active-site residue.

This sequence belongs to the methyltransferase superfamily. L-isoaspartyl/D-aspartyl protein methyltransferase family.

The protein localises to the cytoplasm. It catalyses the reaction [protein]-L-isoaspartate + S-adenosyl-L-methionine = [protein]-L-isoaspartate alpha-methyl ester + S-adenosyl-L-homocysteine. Its function is as follows. Catalyzes the methyl esterification of L-isoaspartyl residues in peptides and proteins that result from spontaneous decomposition of normal L-aspartyl and L-asparaginyl residues. It plays a role in the repair and/or degradation of damaged proteins. This chain is Protein-L-isoaspartate O-methyltransferase, found in Shigella sonnei (strain Ss046).